Consider the following 107-residue polypeptide: MEDGVQAMRDYLAGLDIASPEHQVLMNVTAKSEVAPSIIKENLSLHLTHTVKWTESLDTFLNMPTPVAFLEISNKPYLGNMLNDFAGVDQQRVMHCRKAFSDAKVFK.

This is an uncharacterized protein from Escherichia coli (strain K12).